Consider the following 246-residue polypeptide: MAVISMKQLLEAGVHFGHQTRRWNPKMAKYIFTERNGIYIIDLQKTVKKVDEAYNFVRELAAEGGNVLFVGTKKQAQDTIKEEAIRSGMFFINERWLGGTLTNFSTIKKRINRLKQLEKMEEDGTFEVLPKKEVIILKKEMTRLEKFLGGIKDMPGVPDALFIVDPRKERIAIAEAHKLNIPIVAIVDTNCDPDEIDYVIPANDDAIRAVKLLTSKMADAIIEAKQGEEEVAEEAVATEAEATEAE.

It belongs to the universal ribosomal protein uS2 family.

In Exiguobacterium sp. (strain ATCC BAA-1283 / AT1b), this protein is Small ribosomal subunit protein uS2.